A 71-amino-acid chain; its full sequence is Small ribosomal subunit protein bS18 (71 aa).

The protein belongs to the bacterial ribosomal protein bS18 family. As to quaternary structure, part of the 30S ribosomal subunit. Forms a tight heterodimer with protein bS6.

Its function is as follows. Binds as a heterodimer with protein bS6 to the central domain of the 16S rRNA, where it helps stabilize the platform of the 30S subunit. The protein is Small ribosomal subunit protein bS18 of Synechococcus sp. (strain JA-2-3B'a(2-13)) (Cyanobacteria bacterium Yellowstone B-Prime).